The primary structure comprises 483 residues: NADH-quinone oxidoreductase subunit N (483 aa).

13 helical membrane-spanning segments follow: residues 7–27 (AILT…LGAV), 33–53 (ALAS…AFYI), 76–96 (FAKI…QDYM), 108–128 (VLII…DLIA), 161–181 (FVLG…AYGF), 196–216 (GGDM…GLAF), 235–255 (PTPI…ALFA), 272–292 (IVAF…IGQT), 297–317 (LMAY…SAGT), 323–343 (AMLI…AFIL), 369–389 (ALAI…LGFF), 402–422 (GLVW…FYYI), and 442–462 (MGLV…LGWV).

It belongs to the complex I subunit 2 family. In terms of assembly, NDH-1 is composed of 14 different subunits. Subunits NuoA, H, J, K, L, M, N constitute the membrane sector of the complex.

Its subcellular location is the cell inner membrane. The enzyme catalyses a quinone + NADH + 5 H(+)(in) = a quinol + NAD(+) + 4 H(+)(out). Functionally, NDH-1 shuttles electrons from NADH, via FMN and iron-sulfur (Fe-S) centers, to quinones in the respiratory chain. The immediate electron acceptor for the enzyme in this species is believed to be ubiquinone. Couples the redox reaction to proton translocation (for every two electrons transferred, four hydrogen ions are translocated across the cytoplasmic membrane), and thus conserves the redox energy in a proton gradient. The chain is NADH-quinone oxidoreductase subunit N from Jannaschia sp. (strain CCS1).